The following is a 481-amino-acid chain: Glutamate--tRNA ligase (481 aa).

The 'HIGH' region motif lies at 11 to 21 (PSPTGLLHIGN). Positions 255-259 (KLSKR) match the 'KMSKS' region motif. Residue Lys258 coordinates ATP.

This sequence belongs to the class-I aminoacyl-tRNA synthetase family. Glutamate--tRNA ligase type 1 subfamily. As to quaternary structure, monomer.

It localises to the cytoplasm. It carries out the reaction tRNA(Glu) + L-glutamate + ATP = L-glutamyl-tRNA(Glu) + AMP + diphosphate. In terms of biological role, catalyzes the attachment of glutamate to tRNA(Glu) in a two-step reaction: glutamate is first activated by ATP to form Glu-AMP and then transferred to the acceptor end of tRNA(Glu). In Streptococcus pyogenes serotype M6 (strain ATCC BAA-946 / MGAS10394), this protein is Glutamate--tRNA ligase.